The following is a 37-amino-acid chain: Large ribosomal subunit protein bL36c (37 aa).

The protein belongs to the bacterial ribosomal protein bL36 family.

It localises to the plastid. The protein resides in the chloroplast. The polypeptide is Large ribosomal subunit protein bL36c (Cucumis sativus (Cucumber)).